Reading from the N-terminus, the 333-residue chain is tRNA(Ile)-lysidine synthase (333 aa).

33-38 (SGGADS) provides a ligand contact to ATP.

This sequence belongs to the tRNA(Ile)-lysidine synthase family.

It localises to the cytoplasm. The catalysed reaction is cytidine(34) in tRNA(Ile2) + L-lysine + ATP = lysidine(34) in tRNA(Ile2) + AMP + diphosphate + H(+). Its function is as follows. Ligates lysine onto the cytidine present at position 34 of the AUA codon-specific tRNA(Ile) that contains the anticodon CAU, in an ATP-dependent manner. Cytidine is converted to lysidine, thus changing the amino acid specificity of the tRNA from methionine to isoleucine. This Salinispora arenicola (strain CNS-205) protein is tRNA(Ile)-lysidine synthase.